Reading from the N-terminus, the 314-residue chain is Malate dehydrogenase (314 aa).

Residues 11–16 and aspartate 35 contribute to the NAD(+) site; that span reads GSGNIG. Residues arginine 84 and arginine 90 each contribute to the substrate site. NAD(+) contacts are provided by residues asparagine 97 and 120 to 122; that span reads ITN. Asparagine 122 and arginine 153 together coordinate substrate. Histidine 177 functions as the Proton acceptor in the catalytic mechanism.

Belongs to the LDH/MDH superfamily. MDH type 3 family.

It catalyses the reaction (S)-malate + NAD(+) = oxaloacetate + NADH + H(+). In terms of biological role, catalyzes the reversible oxidation of malate to oxaloacetate. The sequence is that of Malate dehydrogenase from Rickettsia bellii (strain RML369-C).